The sequence spans 466 residues: Fumarate hydratase class II (466 aa).

Substrate-binding positions include 100–102 (SGT), R128, 131–134 (HPND), 141–143 (SSN), and T189. The segment covering 122–137 (GERGERRKVHPNDDVN) has biased composition (basic and acidic residues). The tract at residues 122-143 (GERGERRKVHPNDDVNKGQSSN) is disordered. Residue H190 is the Proton donor/acceptor of the active site. Residue S320 is part of the active site. Residues S321 and 326–328 (KVN) contribute to the substrate site.

The protein belongs to the class-II fumarase/aspartase family. Fumarase subfamily. Homotetramer.

It is found in the cytoplasm. It carries out the reaction (S)-malate = fumarate + H2O. It functions in the pathway carbohydrate metabolism; tricarboxylic acid cycle; (S)-malate from fumarate: step 1/1. Involved in the TCA cycle. Catalyzes the stereospecific interconversion of fumarate to L-malate. This is Fumarate hydratase class II from Myxococcus xanthus (strain DK1622).